The sequence spans 281 residues: Pantothenate synthetase (281 aa).

31-38 (MGNLHAGH) is an ATP binding site. The active-site Proton donor is the H38. Q62 is a binding site for (R)-pantoate. Position 62 (Q62) interacts with beta-alanine. 150–153 (GKKD) contributes to the ATP binding site. A (R)-pantoate-binding site is contributed by Q156. ATP-binding positions include V179 and 187–190 (MSSR).

It belongs to the pantothenate synthetase family. In terms of assembly, homodimer.

It is found in the cytoplasm. It catalyses the reaction (R)-pantoate + beta-alanine + ATP = (R)-pantothenate + AMP + diphosphate + H(+). Its pathway is cofactor biosynthesis; (R)-pantothenate biosynthesis; (R)-pantothenate from (R)-pantoate and beta-alanine: step 1/1. Functionally, catalyzes the condensation of pantoate with beta-alanine in an ATP-dependent reaction via a pantoyl-adenylate intermediate. The chain is Pantothenate synthetase from Xylella fastidiosa (strain M12).